The primary structure comprises 639 residues: Testicular spindle-associated protein SHCBP1L (639 aa).

Disordered regions lie at residues 1-25 (MESD…EQTV) and 48-75 (VASP…ETCD). Ser-3 carries the O-acetylserine modification. A phosphoserine mark is found at Ser-8, Ser-19, and Ser-50. Positions 54–63 (VKGKAARRRL) are enriched in basic residues. Residues 285–312 (IAQRFKKTLEKYKNKRVELIEYQSNIKE) are a coiled coil. PbH1 repeat units lie at residues 479 to 500 (SGHL…CVLT), 501 to 523 (GASL…ELYP), 524 to 557 (GSIA…NMKV), and 560 to 582 (APKL…SILQ). The residue at position 556 (Lys-556) is an N6-acetyllysine. Lys-631 is subject to N6-acetyllysine.

As to quaternary structure, interacts with HSPA2; this interaction may promote the recruitment of HSPA2 to the spindle. In terms of tissue distribution, expressed in pachytene spermatocytes and elongating spermatids inside the seminiferous tubules. Not detected in ovary (at protein level). Testis-specific.

The protein resides in the cytoplasm. Its subcellular location is the cytoskeleton. It is found in the spindle. Its function is as follows. Testis-specific spindle-associated factor that plays a role in spermatogenesis. In association with HSPA2, participates in the maintenance of spindle integrity during meiosis in male germ cells. In Mus musculus (Mouse), this protein is Testicular spindle-associated protein SHCBP1L.